The primary structure comprises 171 residues: MRDFYLFLGAVFLLVLGVWAYNAYKEHKINSFKEISYKVYLFEKGKLKKEEILKITKGTPFYPYVLAKFGNFQEIYEDIEEENMKKFYKERLSADFYLNKKYGKALENLKEIKKEDFNYPSAKSLEAFSYEKLGKINKALSLWSAIKEEYPNTYFGNLSQVKIFLLKEKER.

A signal peptide spans 1 to 20 (MRDFYLFLGAVFLLVLGVWA).

This is an uncharacterized protein from Aquifex aeolicus (strain VF5).